The primary structure comprises 788 residues: Endonuclease MutS2 (788 aa).

332–339 (GPNTGGKT) is an ATP binding site. The 76-residue stretch at 713 to 788 (VDLRGMDAEE…GTGVTVVELK (76 aa)) folds into the Smr domain.

It belongs to the DNA mismatch repair MutS family. MutS2 subfamily. As to quaternary structure, homodimer. Binds to stalled ribosomes, contacting rRNA.

Endonuclease that is involved in the suppression of homologous recombination and thus may have a key role in the control of bacterial genetic diversity. Functionally, acts as a ribosome collision sensor, splitting the ribosome into its 2 subunits. Detects stalled/collided 70S ribosomes which it binds and splits by an ATP-hydrolysis driven conformational change. Acts upstream of the ribosome quality control system (RQC), a ribosome-associated complex that mediates the extraction of incompletely synthesized nascent chains from stalled ribosomes and their subsequent degradation. Probably generates substrates for RQC. The chain is Endonuclease MutS2 from Clostridium botulinum (strain ATCC 19397 / Type A).